The primary structure comprises 81 residues: Small ribosomal subunit protein bS16 (81 aa).

Belongs to the bacterial ribosomal protein bS16 family.

This is Small ribosomal subunit protein bS16 from Teredinibacter turnerae (strain ATCC 39867 / T7901).